The sequence spans 226 residues: PKHD-type hydroxylase Pfl01_0799 (226 aa).

The 101-residue stretch at 78–178 (KVFPPLLNCY…RYASFFWTQS (101 aa)) folds into the Fe2OG dioxygenase domain. His-96, Asp-98, and His-159 together coordinate Fe cation. Arg-169 serves as a coordination point for 2-oxoglutarate.

The cofactor is Fe(2+). L-ascorbate is required as a cofactor.

This chain is PKHD-type hydroxylase Pfl01_0799, found in Pseudomonas fluorescens (strain Pf0-1).